The following is an 858-amino-acid chain: Translation initiation factor IF-2 (858 aa).

Positions 49 to 271 (TTTVTHPKSQ…NKPAPVRKDK (223 aa)) are disordered. Residues 80-226 (NQQQSNSRHQ…RFGGSLNSNN (147 aa)) are compositionally biased toward low complexity. Over residues 239–256 (NRRRNNRNNKSRNNKNQR) the composition is skewed to basic residues. The tr-type G domain occupies 359 to 528 (PRAPVVTVMG…LLQSEVLELT (170 aa)). A G1 region spans residues 368 to 375 (GHVDHGKT). 368 to 375 (GHVDHGKT) serves as a coordination point for GTP. A G2 region spans residues 393-397 (GITQA). The tract at residues 414 to 417 (DTPG) is G3. GTP-binding positions include 414–418 (DTPGH) and 468–471 (NKID). The interval 468–471 (NKID) is G4. Residues 504 to 506 (SAK) form a G5 region.

The protein belongs to the TRAFAC class translation factor GTPase superfamily. Classic translation factor GTPase family. IF-2 subfamily.

The protein resides in the cytoplasm. In terms of biological role, one of the essential components for the initiation of protein synthesis. Protects formylmethionyl-tRNA from spontaneous hydrolysis and promotes its binding to the 30S ribosomal subunits. Also involved in the hydrolysis of GTP during the formation of the 70S ribosomal complex. The polypeptide is Translation initiation factor IF-2 (Lactiplantibacillus plantarum (strain ATCC BAA-793 / NCIMB 8826 / WCFS1) (Lactobacillus plantarum)).